A 240-amino-acid chain; its full sequence is Ribonuclease PH (240 aa).

Phosphate is bound by residues Arg87 and 125 to 127 (GTR).

Belongs to the RNase PH family. In terms of assembly, homohexameric ring arranged as a trimer of dimers.

It carries out the reaction tRNA(n+1) + phosphate = tRNA(n) + a ribonucleoside 5'-diphosphate. Functionally, phosphorolytic 3'-5' exoribonuclease that plays an important role in tRNA 3'-end maturation. Removes nucleotide residues following the 3'-CCA terminus of tRNAs; can also add nucleotides to the ends of RNA molecules by using nucleoside diphosphates as substrates, but this may not be physiologically important. Probably plays a role in initiation of 16S rRNA degradation (leading to ribosome degradation) during starvation. The protein is Ribonuclease PH of Pseudomonas syringae pv. tomato (strain ATCC BAA-871 / DC3000).